The primary structure comprises 473 residues: 3-isopropylmalate dehydratase large subunit (473 aa).

[4Fe-4S] cluster is bound by residues Cys354, Cys414, and Cys417.

It belongs to the aconitase/IPM isomerase family. LeuC type 1 subfamily. As to quaternary structure, heterodimer of LeuC and LeuD. It depends on [4Fe-4S] cluster as a cofactor.

It catalyses the reaction (2R,3S)-3-isopropylmalate = (2S)-2-isopropylmalate. It functions in the pathway amino-acid biosynthesis; L-leucine biosynthesis; L-leucine from 3-methyl-2-oxobutanoate: step 2/4. Functionally, catalyzes the isomerization between 2-isopropylmalate and 3-isopropylmalate, via the formation of 2-isopropylmaleate. The protein is 3-isopropylmalate dehydratase large subunit of Mycobacterium tuberculosis (strain CDC 1551 / Oshkosh).